Reading from the N-terminus, the 117-residue chain is Basic phospholipase A2 pseudexin B chain (117 aa).

7 disulfides stabilise this stretch: Cys11-Cys71, Cys27-Cys117, Cys29-Cys45, Cys44-Cys98, Cys51-Cys91, Cys60-Cys84, and Cys78-Cys89. Positions 28, 30, and 32 each coordinate Ca(2+). Residue His48 is part of the active site. Ca(2+) is bound at residue Asp49. Asp92 is a catalytic residue.

Belongs to the phospholipase A2 family. Group I subfamily. D49 sub-subfamily. The cofactor is Ca(2+). Expressed by the venom gland.

The protein resides in the secreted. It carries out the reaction a 1,2-diacyl-sn-glycero-3-phosphocholine + H2O = a 1-acyl-sn-glycero-3-phosphocholine + a fatty acid + H(+). Its function is as follows. PLA2 catalyzes the calcium-dependent hydrolysis of the 2-acyl groups in 3-sn-phosphoglycerides. This chain is Basic phospholipase A2 pseudexin B chain, found in Pseudechis porphyriacus (Red-bellied black snake).